Consider the following 481-residue polypeptide: Transmembrane protein 39A (481 aa).

A run of 8 helical transmembrane segments spans residues 74 to 94, 109 to 129, 150 to 170, 182 to 202, 278 to 298, 313 to 333, 411 to 431, and 437 to 457; these read LFETLLLLYLLVALLVQYINI, STSLNFHLMDAHLAVFIAVML, LCYVLLLVVRVCVLTLCGWVL, SVLKLLFLGYPFGVYVPLCCL, EVLFNSLLSAYYVAFLPLCFV, LIMVWINAFVMLMSHLLPPHY, LLNVLIGIECSVVVYQLYSLL, and NHTLSLGLILVCNYYVLFKLL.

The protein belongs to the TMEM39 family.

The protein localises to the endoplasmic reticulum membrane. Its function is as follows. Regulates autophagy by controlling the spatial distribution and levels of the intracellular phosphatidylinositol 4-phosphate (PtdIns(4)P) pools. Modulates (PtdIns(4)P) levels by regulating the ER-to-Golgi trafficking of the phosphatidylinositide phosphatase SACM1L. In Danio rerio (Zebrafish), this protein is Transmembrane protein 39A (tmem39a).